The following is a 98-amino-acid chain: MALIYTNTLLAFTISLLGLLLYRSHLMSSLLCLEGMMLSMFVMVAVMILNTHLTTSSMMPIVLLVFAACEAALGLSLLVMVSNTYGIDHVQNLNLLQC.

A run of 3 helical transmembrane segments spans residues 1-21, 29-49, and 61-81; these read MALI…GLLL, SLLC…VMIL, and IVLL…LVMV.

It belongs to the complex I subunit 4L family. Core subunit of respiratory chain NADH dehydrogenase (Complex I) which is composed of 45 different subunits.

It is found in the mitochondrion inner membrane. It carries out the reaction a ubiquinone + NADH + 5 H(+)(in) = a ubiquinol + NAD(+) + 4 H(+)(out). Its function is as follows. Core subunit of the mitochondrial membrane respiratory chain NADH dehydrogenase (Complex I) which catalyzes electron transfer from NADH through the respiratory chain, using ubiquinone as an electron acceptor. Part of the enzyme membrane arm which is embedded in the lipid bilayer and involved in proton translocation. This Rhinolophus monoceros (Formosan lesser horseshoe bat) protein is NADH-ubiquinone oxidoreductase chain 4L (MT-ND4L).